A 596-amino-acid chain; its full sequence is Transcription factor COE3 (596 aa).

Positions Met1–Ser22 are disordered. Residues Arg63–Asn66 are interaction with DNA. The C5-type zinc finger occupies Cys151–Cys170. Interaction with DNA stretches follow at residues Asn197 to Asn204 and Asn236 to Lys239. The region spanning Pro263 to Thr346 is the IPT/TIG domain. The segment at Thr451–Tyr483 is disordered.

This sequence belongs to the COE family. In terms of assembly, forms either a homodimer or a heterodimer with a related family member. Expressed in brain.

The protein localises to the nucleus. Its function is as follows. Transcriptional activator. Recognizes variations of the palindromic sequence 5'-ATTCCCNNGGGAATT-3'. This chain is Transcription factor COE3 (EBF3), found in Homo sapiens (Human).